Consider the following 284-residue polypeptide: MIRDTVVSGIFYPLEYHDLIEMIEYCYLNPRGPKKLPSKLGRYEKPIGVISPHAGYVYSGPIAAHSYKEISKKVSGNITAVIIGPNHSGMGSVVSTMEGIWKTPLGNLEIDNEFSERLWKECDIIDLDETAHLKEHSIEVQLPFLKHLELLNIAKFKFVPISMSLQDYDTAVGVGYMVAKVAKELNRKIIIIASSDFSHYEPEEIASKKDAIIIKDILKMEEEEIFTDVVTNNVTMCGYGPIIAMIKAMKVLGAKESKLLSYSTSGDVTKDYSEVVGYGALIIE.

This sequence belongs to the MEMO1 family.

The chain is MEMO1 family protein Mevan_0697 from Methanococcus vannielii (strain ATCC 35089 / DSM 1224 / JCM 13029 / OCM 148 / SB).